The sequence spans 474 residues: tRNA-2-methylthio-N(6)-dimethylallyladenosine synthase (474 aa).

The region spanning 3-120 (KKLHIKTWGC…LPEMINSVRG (118 aa)) is the MTTase N-terminal domain. Positions 12, 49, 83, 157, 161, and 164 each coordinate [4Fe-4S] cluster. The Radical SAM core domain occupies 143–375 (RAEGPTAFVS…QERINQQAMA (233 aa)). The TRAM domain maps to 378–441 (RRMLGTTQRI…PNSLRGKVVR (64 aa)).

This sequence belongs to the methylthiotransferase family. MiaB subfamily. In terms of assembly, monomer. The cofactor is [4Fe-4S] cluster.

Its subcellular location is the cytoplasm. The enzyme catalyses N(6)-dimethylallyladenosine(37) in tRNA + (sulfur carrier)-SH + AH2 + 2 S-adenosyl-L-methionine = 2-methylsulfanyl-N(6)-dimethylallyladenosine(37) in tRNA + (sulfur carrier)-H + 5'-deoxyadenosine + L-methionine + A + S-adenosyl-L-homocysteine + 2 H(+). In terms of biological role, catalyzes the methylthiolation of N6-(dimethylallyl)adenosine (i(6)A), leading to the formation of 2-methylthio-N6-(dimethylallyl)adenosine (ms(2)i(6)A) at position 37 in tRNAs that read codons beginning with uridine. The polypeptide is tRNA-2-methylthio-N(6)-dimethylallyladenosine synthase (Escherichia coli (strain SMS-3-5 / SECEC)).